Reading from the N-terminus, the 256-residue chain is Acetyl-coenzyme A carboxylase carboxyl transferase subunit alpha (256 aa).

The 236-residue stretch at 1–236 folds into the CoA carboxyltransferase C-terminal domain; that stretch reads MTDVSRVLKE…KANLIEQITS (236 aa).

The protein belongs to the AccA family. In terms of assembly, acetyl-CoA carboxylase is a heterohexamer composed of biotin carboxyl carrier protein (AccB), biotin carboxylase (AccC) and two subunits each of ACCase subunit alpha (AccA) and ACCase subunit beta (AccD).

It is found in the cytoplasm. The catalysed reaction is N(6)-carboxybiotinyl-L-lysyl-[protein] + acetyl-CoA = N(6)-biotinyl-L-lysyl-[protein] + malonyl-CoA. It participates in lipid metabolism; malonyl-CoA biosynthesis; malonyl-CoA from acetyl-CoA: step 1/1. Component of the acetyl coenzyme A carboxylase (ACC) complex. First, biotin carboxylase catalyzes the carboxylation of biotin on its carrier protein (BCCP) and then the CO(2) group is transferred by the carboxyltransferase to acetyl-CoA to form malonyl-CoA. This chain is Acetyl-coenzyme A carboxylase carboxyl transferase subunit alpha, found in Streptococcus pyogenes serotype M12 (strain MGAS2096).